The sequence spans 192 residues: Fe/S biogenesis protein NfuA (192 aa).

Residues cysteine 149 and cysteine 152 each coordinate [4Fe-4S] cluster.

The protein belongs to the NfuA family. Homodimer. The cofactor is [4Fe-4S] cluster.

Involved in iron-sulfur cluster biogenesis. Binds a 4Fe-4S cluster, can transfer this cluster to apoproteins, and thereby intervenes in the maturation of Fe/S proteins. Could also act as a scaffold/chaperone for damaged Fe/S proteins. The sequence is that of Fe/S biogenesis protein NfuA from Idiomarina loihiensis (strain ATCC BAA-735 / DSM 15497 / L2-TR).